The chain runs to 714 residues: Calpain-1 catalytic subunit (714 aa).

Ser2 bears the N-acetylserine mark. One can recognise a Calpain catalytic domain in the interval 55–354 (LFRDEAFPPV…FTRLEICNLT (300 aa)). The Ca(2+) site is built by Gln109 and Asp114. Active-site residues include Cys115, His272, and Asn296. The Ca(2+) site is built by Asn316, Asp318, and Asp323. The residue at position 354 (Thr354) is a Phosphothreonine. The interval 355 to 526 (PDALKSRTIR…KSAGTVELDD (172 aa)) is domain III. The segment at 527 to 542 (QIQANLPDEQVLSEEE) is linker. 4 consecutive EF-hand domains span residues 541–576 (EEID…IISK), 585–618 (FSLE…NRIR), 615–650 (NRIR…AGFK), and 680–714 (VRLE…TMFA). Residues 543-713 (IDENFKALFR…LFKWLQLTMF (171 aa)) are domain IV. The Ca(2+) site is built by Asp598, Asp600, Asn602, Lys604, Glu609, Asp628, Asp630, Ser632, Ser634, and Glu639.

Belongs to the peptidase C2 family. As to quaternary structure, forms a heterodimer with a small (regulatory) subunit CAPNS1. Ca(2+) serves as cofactor. Undergoes calcium-induced successive autoproteolytic cleavages that generate a membrane-bound 78 kDa active form and an intracellular 75 kDa active form. Calpastatin reduces with high efficiency the transition from 78 kDa to 75 kDa calpain forms. As to expression, ubiquitous.

The protein resides in the cytoplasm. It localises to the cell membrane. The catalysed reaction is Broad endopeptidase specificity.. With respect to regulation, activated by micromolar concentrations of calcium and inhibited by calpastatin. Its function is as follows. Calcium-regulated non-lysosomal thiol-protease which catalyzes limited proteolysis of substrates involved in cytoskeletal remodeling and signal transduction. Proteolytically cleaves CTBP1 at 'Asn-375', 'Gly-387' and 'His-409'. Cleaves and activates caspase-7 (CASP7). This Homo sapiens (Human) protein is Calpain-1 catalytic subunit.